We begin with the raw amino-acid sequence, 1388 residues long: DNA-directed RNA polymerase subunit beta (1388 aa).

It belongs to the RNA polymerase beta chain family. The RNAP catalytic core consists of 2 alpha, 1 beta, 1 beta' and 1 omega subunit. When a sigma factor is associated with the core the holoenzyme is formed, which can initiate transcription.

It catalyses the reaction RNA(n) + a ribonucleoside 5'-triphosphate = RNA(n+1) + diphosphate. In terms of biological role, DNA-dependent RNA polymerase catalyzes the transcription of DNA into RNA using the four ribonucleoside triphosphates as substrates. The protein is DNA-directed RNA polymerase subunit beta of Xylella fastidiosa (strain 9a5c).